Here is a 265-residue protein sequence, read N- to C-terminus: Anamorsin homolog 1 (265 aa).

Residues 1-143 (MAATAAAALA…KASWSMGSSF (143 aa)) form an N-terminal SAM-like domain region. The linker stretch occupies residues 144–175 (PLKKATKGLPKIQIDDDSELIDEDSLLTEDDL). [2Fe-2S] cluster-binding residues include C186, C195, C198, and C200. A fe-S binding site A region spans residues 186–200 (CEVGATRKACKNCTC). [4Fe-4S] cluster is bound by residues C226, C229, C237, and C240. 2 short sequence motifs (cx2C motif) span residues 226–229 (CGNC) and 237–240 (CGTC). Residues 226–240 (CGNCGLGDAFRCGTC) form a fe-S binding site B region.

This sequence belongs to the anamorsin family. As to quaternary structure, monomer. [2Fe-2S] cluster is required as a cofactor. It depends on [4Fe-4S] cluster as a cofactor.

The protein localises to the cytoplasm. It localises to the mitochondrion intermembrane space. Functionally, component of the cytosolic iron-sulfur (Fe-S) protein assembly (CIA) machinery. Required for the maturation of extramitochondrial Fe-S proteins. Part of an electron transfer chain functioning in an early step of cytosolic Fe-S biogenesis, facilitating the de novo assembly of a [4Fe-4S] cluster on the cytosolic Fe-S scaffold complex. Electrons are transferred from NADPH via a FAD- and FMN-containing diflavin oxidoreductase. Together with the diflavin oxidoreductase, also required for the assembly of the diferric tyrosyl radical cofactor of ribonucleotide reductase (RNR), probably by providing electrons for reduction during radical cofactor maturation in the catalytic small subunit. The polypeptide is Anamorsin homolog 1 (Oryza sativa subsp. indica (Rice)).